The chain runs to 165 residues: Inorganic pyrophosphatase (165 aa).

Substrate is bound by residues Lys-21, Arg-35, and Tyr-47. Residues Asp-57, Asp-62, and Asp-94 each contribute to the Mg(2+) site. Tyr-131 serves as a coordination point for substrate.

The protein belongs to the PPase family. As to quaternary structure, homohexamer. It depends on Mg(2+) as a cofactor.

The protein resides in the cytoplasm. The catalysed reaction is diphosphate + H2O = 2 phosphate + H(+). Its function is as follows. Catalyzes the hydrolysis of inorganic pyrophosphate (PPi) forming two phosphate ions. This Geobacillus stearothermophilus (Bacillus stearothermophilus) protein is Inorganic pyrophosphatase.